A 79-amino-acid chain; its full sequence is Translational regulator CsrA (79 aa).

The protein belongs to the CsrA/RsmA family. In terms of assembly, homodimer; the beta-strands of each monomer intercalate to form a hydrophobic core, while the alpha-helices form wings that extend away from the core.

It localises to the cytoplasm. A translational regulator that binds mRNA to regulate translation initiation and/or mRNA stability. Usually binds in the 5'-UTR at or near the Shine-Dalgarno sequence preventing ribosome-binding, thus repressing translation. Its main target seems to be the major flagellin gene, while its function is anatagonized by FliW. This is Translational regulator CsrA from Geobacter sulfurreducens (strain ATCC 51573 / DSM 12127 / PCA).